The chain runs to 43 residues: Gene 75 protein (43 aa).

In Mycobacterium (Mycobacteriophage L5), this protein is Gene 75 protein (75).